The chain runs to 765 residues: Protein suppressor of forked (765 aa).

HAT repeat units lie at residues 46-78 (RPIH…MEMR), 80-111 (RYYE…YVKE), 118-153 (THKE…FLRG), 164-197 (QKIT…FEQN), 230-262 (GLNR…YEKS), 387-420 (LKYE…FARR), and 491-527 (NEDN…FESN). Disordered stretches follow at residues 595–615 (GAQS…PPLP) and 727–747 (RRRR…TAVP). Residue S738 is modified to Phosphoserine.

In terms of assembly, probably interacts with an RNA-binding protein.

It localises to the nucleus. In terms of biological role, essential protein, may play a role in mRNA production or stability. This Drosophila melanogaster (Fruit fly) protein is Protein suppressor of forked (su(f)).